The primary structure comprises 276 residues: Outer plastidial membrane protein porin (276 aa).

Belongs to the eukaryotic mitochondrial porin (TC 1.B.8.1) family.

The protein resides in the plastid outer membrane. Functionally, forms a channel through the cell membrane that allows diffusion of small hydrophilic molecules. The channel adopts an open conformation at low or zero membrane potential and a closed conformation at potentials above 30-40 mV. The open state has a weak anion selectivity whereas the closed state is cation-selective. The sequence is that of Outer plastidial membrane protein porin (POR1) from Pisum sativum (Garden pea).